A 146-amino-acid polypeptide reads, in one-letter code: MAYAYRRTIHLADTDAAGVVYFAQLLHICHEAYEICLIGNGMDWSGLLREGTVALPIVHSAIDFLRPITWGDRLDIQLYPELENSRQFKISYRIFKENQDSPPESPLATALTRHVAINPRTRQRCSLPPVVETWLRNAPKIEDSKI.

Asp15 is an active-site residue.

The protein belongs to the 4-hydroxybenzoyl-CoA thioesterase family. DHNA-CoA hydrolase subfamily.

It catalyses the reaction 1,4-dihydroxy-2-naphthoyl-CoA + H2O = 1,4-dihydroxy-2-naphthoate + CoA + H(+). The protein operates within cofactor biosynthesis; phylloquinone biosynthesis. It participates in quinol/quinone metabolism; 1,4-dihydroxy-2-naphthoate biosynthesis; 1,4-dihydroxy-2-naphthoate from chorismate: step 7/7. Its function is as follows. Catalyzes the hydrolysis of 1,4-dihydroxy-2-naphthoyl-CoA (DHNA-CoA) to 1,4-dihydroxy-2-naphthoate (DHNA), a reaction involved in phylloquinone (vitamin K1) biosynthesis. The sequence is that of 1,4-dihydroxy-2-naphthoyl-CoA hydrolase from Picosynechococcus sp. (strain ATCC 27264 / PCC 7002 / PR-6) (Agmenellum quadruplicatum).